The sequence spans 379 residues: Queuine tRNA-ribosyltransferase (379 aa).

Residue Asp-94 is the Proton acceptor of the active site. Substrate is bound by residues 94 to 98, Asp-148, Gln-191, and Gly-218; that span reads DSGGF. The segment at 249–255 is RNA binding; it reads GVGSPDS. The active-site Nucleophile is Asp-268. An RNA binding; important for wobble base 34 recognition region spans residues 273 to 277; that stretch reads TRIAR. 4 residues coordinate Zn(2+): Cys-306, Cys-308, Cys-311, and His-337.

Belongs to the queuine tRNA-ribosyltransferase family. In terms of assembly, homodimer. Within each dimer, one monomer is responsible for RNA recognition and catalysis, while the other monomer binds to the replacement base PreQ1. Requires Zn(2+) as cofactor.

The enzyme catalyses 7-aminomethyl-7-carbaguanine + guanosine(34) in tRNA = 7-aminomethyl-7-carbaguanosine(34) in tRNA + guanine. Its pathway is tRNA modification; tRNA-queuosine biosynthesis. Functionally, catalyzes the base-exchange of a guanine (G) residue with the queuine precursor 7-aminomethyl-7-deazaguanine (PreQ1) at position 34 (anticodon wobble position) in tRNAs with GU(N) anticodons (tRNA-Asp, -Asn, -His and -Tyr). Catalysis occurs through a double-displacement mechanism. The nucleophile active site attacks the C1' of nucleotide 34 to detach the guanine base from the RNA, forming a covalent enzyme-RNA intermediate. The proton acceptor active site deprotonates the incoming PreQ1, allowing a nucleophilic attack on the C1' of the ribose to form the product. After dissociation, two additional enzymatic reactions on the tRNA convert PreQ1 to queuine (Q), resulting in the hypermodified nucleoside queuosine (7-(((4,5-cis-dihydroxy-2-cyclopenten-1-yl)amino)methyl)-7-deazaguanosine). The sequence is that of Queuine tRNA-ribosyltransferase from Listeria monocytogenes serovar 1/2a (strain ATCC BAA-679 / EGD-e).